The chain runs to 98 residues: Aspartyl/glutamyl-tRNA(Asn/Gln) amidotransferase subunit C (98 aa).

This sequence belongs to the GatC family. In terms of assembly, heterotrimer of A, B and C subunits.

The enzyme catalyses L-glutamyl-tRNA(Gln) + L-glutamine + ATP + H2O = L-glutaminyl-tRNA(Gln) + L-glutamate + ADP + phosphate + H(+). It carries out the reaction L-aspartyl-tRNA(Asn) + L-glutamine + ATP + H2O = L-asparaginyl-tRNA(Asn) + L-glutamate + ADP + phosphate + 2 H(+). In terms of biological role, allows the formation of correctly charged Asn-tRNA(Asn) or Gln-tRNA(Gln) through the transamidation of misacylated Asp-tRNA(Asn) or Glu-tRNA(Gln) in organisms which lack either or both of asparaginyl-tRNA or glutaminyl-tRNA synthetases. The reaction takes place in the presence of glutamine and ATP through an activated phospho-Asp-tRNA(Asn) or phospho-Glu-tRNA(Gln). This is Aspartyl/glutamyl-tRNA(Asn/Gln) amidotransferase subunit C from Bifidobacterium adolescentis (strain ATCC 15703 / DSM 20083 / NCTC 11814 / E194a).